Reading from the N-terminus, the 127-residue chain is Putative lipoprotein LprJ (127 aa).

An N-terminal signal peptide occupies residues 1-34 (MTAHTHDGTRTWRTGRQATTLLALLAGVFGGAAS). Cys35 carries N-palmitoyl cysteine lipidation. Cys35 carries the S-diacylglycerol cysteine lipid modification. Topologically, residues 35–99 (CAAPIQADMM…MAEINGMSRD (65 aa)) are extracellular. A helical membrane pass occupies residues 100–120 (MASTFTIVAIGTYCPAVIAPL). The Cytoplasmic segment spans residues 121-127 (MPNRLQA).

As to quaternary structure, may interact with sensor protein KdpD. In terms of processing, modified by Lgt on Cys-35 with an S-linked diacylglycerol, signal peptide is removed by LspA, modified by Lnt with amide-linked fatty acid.

The protein resides in the cell membrane. In terms of biological role, overexpression induces expression of sensor protein kdpD gene at low K(+) concentrations (0 and 250 uM, tested in M.smegatis). The polypeptide is Putative lipoprotein LprJ (lprJ) (Mycobacterium tuberculosis (strain ATCC 25618 / H37Rv)).